Reading from the N-terminus, the 334-residue chain is Photosystem II assembly protein Ycf48 (334 aa).

An N-terminal signal peptide occupies residues 1–22; it reads MAKMLKLWRLVLLAAFSLLLMA.

Belongs to the Ycf48 family. Part of early PSII assembly complexes which includes D1 (psbA) and PsbI; not found in mature PSII. Binds to the lumenal side of PSII complexes. Interacts with YidC.

It localises to the cellular thylakoid lumen. Its function is as follows. A factor required for optimal assembly of photosystem II (PSII), acting in the early stages of PSII assembly. Also plays a role in replacement of photodamaged D1 (psbA). Assists YidC in synthesis of chlorophyll-binding proteins. This chain is Photosystem II assembly protein Ycf48, found in Synechococcus sp. (strain JA-3-3Ab) (Cyanobacteria bacterium Yellowstone A-Prime).